Consider the following 224-residue polypeptide: Stage II sporulation protein R (224 aa).

This chain is Stage II sporulation protein R (spoIIR), found in Bacillus subtilis (strain 168).